The primary structure comprises 572 residues: NADP-dependent malic enzyme (572 aa).

Residue Met1 is modified to N-acetylmethionine. The Proton donor role is filled by Tyr102. Arg155 lines the NADP(+) pocket. Lys173 acts as the Proton acceptor in catalysis. The a divalent metal cation site is built by Glu245, Asp246, and Asp269. NADP(+) contacts are provided by residues Asp269 and 301-318 (GAGE…MALE). Position 336 is a phosphoserine (Ser336). An NADP(+)-binding site is contributed by Asn408.

It belongs to the malic enzymes family. Homotetramer. Mg(2+) serves as cofactor. It depends on Mn(2+) as a cofactor. In terms of tissue distribution, expressed in all tissues tested including liver, placenta and white adipose tissue.

The protein resides in the cytoplasm. It carries out the reaction (S)-malate + NADP(+) = pyruvate + CO2 + NADPH. The catalysed reaction is oxaloacetate + H(+) = pyruvate + CO2. Functionally, catalyzes the oxidative decarboxylation of (S)-malate in the presence of NADP(+) and divalent metal ions, and decarboxylation of oxaloacetate. In Homo sapiens (Human), this protein is NADP-dependent malic enzyme.